Consider the following 523-residue polypeptide: MRAMHPLLKEILTHPPSGQHECVHGWVRSKRETKRAVFISLSDGSCPDTLQVTVPLPECSASLSSGAQAEQIPNVRDAVLQGETLAQTLKRVTTGACIRAEGALVPSPGAGQALELRACNLTVLGEAPAETYPLQKKSHSFEFLRAHAHLRARTSTFAACARVRSALAGAVHRFFSERHFQYVHTPIITASDCEGAGELFRVTTFDPVRIAREAHAAGAAGNPYALTYADDFFGKAARLTVSGQLQGEAYALALTRIYTFGPTFRAENSNTSRHLSEFWMVEPEIAFARITDCMDVAEEFLAYLLRAALKDCAQDIAFLDERAAQHARSARGDTPLAARSTARTPPVRTPGQLTRMLEDVARAPATRLTYTEAIKLLENSGRSFEFPVRWGCDLQSEHECFLTEEVFHGPVIVYDYPKEIKAFYMKLNADGTTVRSMDLLVPGLGEIMGGSEREEQFEVLCARIRASGFDPHDYRWYTDLRRFGTAPHAGFGLGFERLLQYVTGLGNIRDVIPFPRTPRTADF.

The disordered stretch occupies residues 329 to 350; it reads SARGDTPLAARSTARTPPVRTP.

Belongs to the class-II aminoacyl-tRNA synthetase family. Homodimer.

The protein localises to the cytoplasm. It catalyses the reaction tRNA(Asn) + L-asparagine + ATP = L-asparaginyl-tRNA(Asn) + AMP + diphosphate + H(+). This is Asparagine--tRNA ligase from Treponema pallidum (strain Nichols).